Here is a 555-residue protein sequence, read N- to C-terminus: MFQYLYYIWEEPISISLGNWLNIGDIIIPYGLSLDSLAMTVMIPVGIVTLCVLLYAIEYMSHDPNRNTFYIILSVFAIFMTILVVSDNYIMMFIGWEFVGVISYLLISFWSTRIAAMKAALSAILLNRMGDTFFMLALGIFLSYFHAVDFDTLSLAAPYTNTLILNILSLLLLLAATAKSAQLGLHAWLLQAMEGPTPVSALLHAATMVCAGVYVLVRSYFILEYAPSLLIGICWLGGVTTLVSGLIAIVTNDIKKVIALSTMSQLSIMVLAIGISSYDLAIYHLYCHAFFKALLFMGAGSVIHSYISETQDMRKYGGLVNYLPFSYTAILIASLSLMAIPGLTGYYSKDIIIESLYGTYTFSGYILYYMAVGSATLTSLYSIRVLYLTFYNNPNSNKATYQHIHENIRMLIPMIILVIYSIFIGFNRDNVIGHYAMSLPANNSFIETEFTLPWYIKLLPLILGLSLSLLLVYIYEYAYKVRPSSIYNYFNNKIYYDQLLNNVIIRKTLIFGGYLNTYIDNGLLKVLGSTGISRALTYINIGIFLNLLYLFFFYR.

15 helical membrane passes run L37–I57, F69–Y89, I90–W110, F133–L153, L155–A175, T197–V217, L230–V250, V257–I275, C287–I307, L323–L343, I366–L388, E406–F426, W454–I474, I494–N516, and R534–Y554.

This sequence belongs to the complex I subunit 5 family.

The protein resides in the mitochondrion inner membrane. It carries out the reaction a ubiquinone + NADH + 5 H(+)(in) = a ubiquinol + NAD(+) + 4 H(+)(out). Core subunit of the mitochondrial membrane respiratory chain NADH dehydrogenase (Complex I) that is believed to belong to the minimal assembly required for catalysis. Complex I functions in the transfer of electrons from NADH to the respiratory chain. The immediate electron acceptor for the enzyme is believed to be ubiquinone. This is NADH-ubiquinone oxidoreductase chain 5 (ND5) from Candida parapsilosis (Yeast).